A 136-amino-acid polypeptide reads, in one-letter code: Glutamate mutase sigma subunit (136 aa).

One can recognise a B12-binding domain in the interval Lys3–Ile136. Residues Ser13–Thr17, His16, and Ser61–Ile63 each bind adenosylcob(III)alamin.

It belongs to the methylaspartate mutase GlmS subunit family. In terms of assembly, heterotetramer composed of 2 epsilon subunits (GlmE) and 2 sigma subunits (GlmS). GlmE exists as a homodimer and GlmS as a monomer. Requires adenosylcob(III)alamin as cofactor.

It carries out the reaction (2S,3S)-3-methyl-L-aspartate = L-glutamate. It functions in the pathway amino-acid degradation; L-glutamate degradation via mesaconate pathway; acetate and pyruvate from L-glutamate: step 1/4. Catalyzes the carbon skeleton rearrangement of L-glutamate to L-threo-3-methylaspartate ((2S,3S)-3-methylaspartate). The chain is Glutamate mutase sigma subunit from Fusobacterium nucleatum subsp. nucleatum (strain ATCC 25586 / DSM 15643 / BCRC 10681 / CIP 101130 / JCM 8532 / KCTC 2640 / LMG 13131 / VPI 4355).